We begin with the raw amino-acid sequence, 57 residues long: UPF0434 protein Shal_2504 (57 aa).

This sequence belongs to the UPF0434 family.

The chain is UPF0434 protein Shal_2504 from Shewanella halifaxensis (strain HAW-EB4).